The sequence spans 263 residues: Undecaprenyl-diphosphatase (263 aa).

The next 8 membrane-spanning stretches (helical) occupy residues 1–21 (MSYL…FLPI), 41–61 (FTKA…LVLY), 69–89 (WGFY…GFVV), 96–116 (LMGS…ILIW), 147–167 (AIAM…GLTL), 177–197 (FSFF…LLKI), 208–228 (LLLV…KFFI), and 238–258 (GFGY…YTGH).

Belongs to the UppP family.

Its subcellular location is the cell inner membrane. It carries out the reaction di-trans,octa-cis-undecaprenyl diphosphate + H2O = di-trans,octa-cis-undecaprenyl phosphate + phosphate + H(+). Catalyzes the dephosphorylation of undecaprenyl diphosphate (UPP). Confers resistance to bacitracin. The polypeptide is Undecaprenyl-diphosphatase (Bdellovibrio bacteriovorus (strain ATCC 15356 / DSM 50701 / NCIMB 9529 / HD100)).